Consider the following 367-residue polypeptide: Ribosomal lysine N-methyltransferase 5 (367 aa).

The interval 55 to 74 is disordered; that stretch reads EGGRKKKRVRRRNKASSVEE. Over residues 58-68 the composition is skewed to basic residues; that stretch reads RKKKRVRRRNK. S-adenosyl-L-methionine contacts are provided by residues tryptophan 110, 170–172, aspartate 192, tryptophan 256, and methionine 288; that span reads GAG.

It belongs to the class I-like SAM-binding methyltransferase superfamily. RKM5 family.

Functionally, S-adenosyl-L-methionine-dependent protein-lysine N-methyltransferase that monomethylates 60S ribosomal protein L1 (RPL1A and RPL1B) at 'Lys-46'. This is Ribosomal lysine N-methyltransferase 5 (RKM5) from Saccharomyces cerevisiae (strain RM11-1a) (Baker's yeast).